A 212-amino-acid polypeptide reads, in one-letter code: MKRYFVTGTDTDCGKTFVTNQLVNYFSSSAAIKPIASGCEYSKNQLVNSDALLHQQQNHLPLEIINPWRFRLPVSPHLSAREDGASIDVHKVADYCLNLQLNDIKKLFIEGAGGLMVPLNEQDTWLDFLKLTRIPVILVVGMKLGCINHTLLTQEVLEINKIKCQGWIANCLDQDMLMLDENISTLEAKLKYPLLARTNYGGKISDICLSSL.

An ATP-binding site is contributed by 12–17 (DCGKTF). Residue Thr16 coordinates Mg(2+). Lys33 is a catalytic residue. Ser37 provides a ligand contact to substrate. Residues Asp50, 110–113 (EGAG), and 170–171 (NC) each bind ATP. Mg(2+) is bound by residues Asp50 and Glu110.

Belongs to the dethiobiotin synthetase family. Homodimer. Mg(2+) is required as a cofactor.

The protein resides in the cytoplasm. The enzyme catalyses (7R,8S)-7,8-diammoniononanoate + CO2 + ATP = (4R,5S)-dethiobiotin + ADP + phosphate + 3 H(+). Its pathway is cofactor biosynthesis; biotin biosynthesis; biotin from 7,8-diaminononanoate: step 1/2. Its function is as follows. Catalyzes a mechanistically unusual reaction, the ATP-dependent insertion of CO2 between the N7 and N8 nitrogen atoms of 7,8-diaminopelargonic acid (DAPA, also called 7,8-diammoniononanoate) to form a ureido ring. This chain is ATP-dependent dethiobiotin synthetase BioD, found in Legionella pneumophila (strain Corby).